The sequence spans 133 residues: Large ribosomal subunit protein uL22 (133 aa).

The protein belongs to the universal ribosomal protein uL22 family. Part of the 50S ribosomal subunit.

Functionally, this protein binds specifically to 23S rRNA; its binding is stimulated by other ribosomal proteins, e.g. L4, L17, and L20. It is important during the early stages of 50S assembly. It makes multiple contacts with different domains of the 23S rRNA in the assembled 50S subunit and ribosome. The globular domain of the protein is located near the polypeptide exit tunnel on the outside of the subunit, while an extended beta-hairpin is found that lines the wall of the exit tunnel in the center of the 70S ribosome. This is Large ribosomal subunit protein uL22 from Borrelia garinii subsp. bavariensis (strain ATCC BAA-2496 / DSM 23469 / PBi) (Borreliella bavariensis).